Here is a 129-residue protein sequence, read N- to C-terminus: Iron-sulfur cluster assembly 1 homolog, mitochondrial (129 aa).

The transit peptide at 1 to 12 directs the protein to the mitochondrion; sequence MASSVVRATVRA. C57, C121, and C123 together coordinate Fe cation.

The protein belongs to the HesB/IscA family.

Its subcellular location is the mitochondrion. Functionally, involved in the maturation of mitochondrial 4Fe-4S proteins functioning late in the iron-sulfur cluster assembly pathway. Probably involved in the binding of an intermediate of Fe/S cluster assembly. This Gallus gallus (Chicken) protein is Iron-sulfur cluster assembly 1 homolog, mitochondrial (ISCA1).